The following is a 516-amino-acid chain: Maturase K (516 aa).

This sequence belongs to the intron maturase 2 family. MatK subfamily.

Its subcellular location is the plastid. It localises to the chloroplast. In terms of biological role, usually encoded in the trnK tRNA gene intron. Probably assists in splicing its own and other chloroplast group II introns. The protein is Maturase K of Disporum sessile (Japanese fairy bells).